Consider the following 139-residue polypeptide: Large ribosomal subunit protein bL17 (139 aa).

Belongs to the bacterial ribosomal protein bL17 family. Part of the 50S ribosomal subunit. Contacts protein L32.

The protein is Large ribosomal subunit protein bL17 of Myxococcus xanthus (strain DK1622).